Reading from the N-terminus, the 318-residue chain is Death effector domain-containing protein (318 aa).

One can recognise a DED domain in the interval serine 25–leucine 103. Disordered regions lie at residues proline 128–proline 147 and glutamine 160–glutamine 191.

Interacts with CASP8, CASP10, KRT8, KRT18, CASP3 and FADD. Homodimerizes and heterodimerizes with DEDD2. In terms of processing, exists predominantly in a mono- or diubiquitinated form. As to expression, widely expressed with highest levels in testis.

The protein resides in the cytoplasm. The protein localises to the nucleus. Its subcellular location is the nucleolus. Its function is as follows. A scaffold protein that directs CASP3 to certain substrates and facilitates their ordered degradation during apoptosis. May also play a role in mediating CASP3 cleavage of KRT18. Regulates degradation of intermediate filaments during apoptosis. May play a role in the general transcription machinery in the nucleus and might be an important regulator of the activity of GTF3C3. Inhibits DNA transcription in vitro. This Homo sapiens (Human) protein is Death effector domain-containing protein (DEDD).